Here is a 478-residue protein sequence, read N- to C-terminus: Dihydrolipoyl dehydrogenase (478 aa).

FAD-binding positions include 34–49 (EKYIGKEGKVALGGTC), Lys58, and Gly122. Cys49 and Cys54 form a disulfide bridge. NAD(+) contacts are provided by residues 188 to 192 (GAGVI), Glu211, Val245, and 276 to 279 (AVGR). Residues Asp319 and Ala327 each contribute to the FAD site. The Proton acceptor role is filled by His451.

Belongs to the class-I pyridine nucleotide-disulfide oxidoreductase family. Homodimer. The cofactor is FAD.

It is found in the cytoplasm. It carries out the reaction N(6)-[(R)-dihydrolipoyl]-L-lysyl-[protein] + NAD(+) = N(6)-[(R)-lipoyl]-L-lysyl-[protein] + NADH + H(+). In terms of biological role, the branched-chain alpha-keto dehydrogenase complex catalyzes the overall conversion of alpha-keto acids to acyl-CoA and CO(2). It contains multiple copies of 3 enzymatic components: branched-chain alpha-keto acid decarboxylase (E1), lipoamide acyltransferase (E2) and lipoamide dehydrogenase (E3). Also acts in the glycine cleavage system. The protein is Dihydrolipoyl dehydrogenase (lpdG) of Pseudomonas aeruginosa (strain ATCC 15692 / DSM 22644 / CIP 104116 / JCM 14847 / LMG 12228 / 1C / PRS 101 / PAO1).